The chain runs to 276 residues: Large ribosomal subunit protein uL2 (276 aa).

A disordered region spans residues Arg-221–Lys-276. Residues Lys-252 to Lys-276 are compositionally biased toward basic residues.

Belongs to the universal ribosomal protein uL2 family. In terms of assembly, part of the 50S ribosomal subunit. Forms a bridge to the 30S subunit in the 70S ribosome.

Functionally, one of the primary rRNA binding proteins. Required for association of the 30S and 50S subunits to form the 70S ribosome, for tRNA binding and peptide bond formation. It has been suggested to have peptidyltransferase activity; this is somewhat controversial. Makes several contacts with the 16S rRNA in the 70S ribosome. In Aster yellows phytoplasma, this protein is Large ribosomal subunit protein uL2.